The primary structure comprises 405 residues: Imidazolonepropionase (405 aa).

Fe(3+) is bound by residues His-70 and His-72. Zn(2+) contacts are provided by His-70 and His-72. 4-imidazolone-5-propanoate-binding residues include Arg-79, Tyr-142, and His-175. Tyr-142 serves as a coordination point for N-formimidoyl-L-glutamate. Fe(3+) is bound at residue His-240. His-240 is a binding site for Zn(2+). 4-imidazolone-5-propanoate is bound at residue Gln-243. Asp-315 contributes to the Fe(3+) binding site. A Zn(2+)-binding site is contributed by Asp-315. The N-formimidoyl-L-glutamate site is built by Asn-317 and Gly-319. Position 320 (Ser-320) interacts with 4-imidazolone-5-propanoate.

This sequence belongs to the metallo-dependent hydrolases superfamily. HutI family. Requires Zn(2+) as cofactor. It depends on Fe(3+) as a cofactor.

The protein localises to the cytoplasm. It catalyses the reaction 4-imidazolone-5-propanoate + H2O = N-formimidoyl-L-glutamate. It participates in amino-acid degradation; L-histidine degradation into L-glutamate; N-formimidoyl-L-glutamate from L-histidine: step 3/3. Catalyzes the hydrolytic cleavage of the carbon-nitrogen bond in imidazolone-5-propanoate to yield N-formimidoyl-L-glutamate. It is the third step in the universal histidine degradation pathway. The sequence is that of Imidazolonepropionase from Ruegeria sp. (strain TM1040) (Silicibacter sp.).